We begin with the raw amino-acid sequence, 858 residues long: Volume-regulated anion channel subunit LRRC8D (858 aa).

At 1-22 (MFTLAEVASLNDIQPTYRILKP) the chain is on the cytoplasmic side. Residues 23-48 (WWDVFMDYLAVVMLMVAIFAGTMQLT) traverse the membrane as a helical segment. The Extracellular segment spans residues 49–163 (KDQVVCLPVL…YHLALPWYSK (115 aa)). An intrachain disulfide couples cysteine 54 to cysteine 354. Residues 164 to 182 (YFPYLALIHTIILMVSSNF) form a helical membrane-spanning segment. Topologically, residues 183-308 (WFKYPKTCSK…EDSDLIYKLY (126 aa)) are cytoplasmic. Residues 221 to 251 (SEENKQRITGAQTLPKHVSTSSDEGSPSAST) form a disordered region. Over residues 227-251 (RITGAQTLPKHVSTSSDEGSPSAST) the composition is skewed to polar residues. Phosphoserine is present on residues serine 241, serine 242, and serine 246. A helical transmembrane segment spans residues 309 to 328 (VVQTVIKTAKFIFILCYTAN). At 329-360 (FVNAISFEHVCKPKVEHLIGYEVFECTHNMAY) the chain is on the extracellular side. The chain crosses the membrane as a helical span at residues 361-386 (MLKKLLISYISIICVYGFICLYTLFW). Over 387–858 (LFRIPLKEYS…DINIPFANGI (472 aa)) the chain is Cytoplasmic. 13 LRR repeats span residues 514 to 534 (NLQE…AFSF), 538 to 559 (HLRC…VYLL), 561 to 582 (NLRE…IGLE), 589 to 609 (HLKI…ITDV), 612 to 632 (HLTK…NSLK), 636 to 657 (NVAE…IFSL), 659 to 680 (NLQE…ISFQ), 684 to 705 (RLTC…ITHV), 707 to 728 (NLES…VFSL), 730 to 751 (KLRC…IGLL), 753 to 774 (NLQH…LFKC), 776 to 797 (KLRT…VGQL), and 799 to 820 (QLTQ…LGQC).

This sequence belongs to the LRRC8 family. As to quaternary structure, heterohexamer; oligomerizes with other LRRC8 proteins (LRRC8A, LRRC8B, LRRC8C and/or LRRC8E) to form a heterohexamer. In vivo, the subunit composition may depend primarily on expression levels, and heterooligomeric channels containing various proportions of the different LRRC8 proteins may coexist.

It is found in the cell membrane. The protein localises to the endoplasmic reticulum membrane. The enzyme catalyses chloride(in) = chloride(out). The catalysed reaction is iodide(out) = iodide(in). It carries out the reaction taurine(out) = taurine(in). Its function is as follows. Non-essential component of the volume-regulated anion channel (VRAC, also named VSOAC channel), an anion channel required to maintain a constant cell volume in response to extracellular or intracellular osmotic changes. The VRAC channel conducts iodide better than chloride and can also conduct organic osmolytes like taurine. Plays a redundant role in the efflux of amino acids, such as aspartate, in response to osmotic stress. LRRC8A and LRRC8D are required for the uptake of the drug cisplatin. Channel activity requires LRRC8A plus at least one other family member (LRRC8B, LRRC8C, LRRC8D or LRRC8E); channel characteristics depend on the precise subunit composition. Also acts as a regulator of glucose-sensing in pancreatic beta cells: VRAC currents, generated in response to hypotonicity- or glucose-induced beta cell swelling, depolarize cells, thereby causing electrical excitation, leading to increase glucose sensitivity and insulin secretion. VRAC channels containing LRRC8D inhibit transport of immunoreactive cyclic dinucleotide GMP-AMP (2'-3'-cGAMP), an immune messenger produced in response to DNA virus in the cytosol. Mediates the import of the antibiotic blasticidin-S into the cell. This chain is Volume-regulated anion channel subunit LRRC8D, found in Homo sapiens (Human).